Here is a 373-residue protein sequence, read N- to C-terminus: STE20-related kinase adapter protein alpha (373 aa).

Positions 11–321 (YELLTVIGKG…ASTLLNHSFF (311 aa)) constitute a Protein kinase domain. A compositionally biased stretch (polar residues) spans 255–281 (STSRSAANSGLSESLAPSTPRTSNGDS). The tract at residues 255–288 (STSRSAANSGLSESLAPSTPRTSNGDSPSHPYHR) is disordered. T361 is subject to Phosphothreonine; by LKB1.

Belongs to the protein kinase superfamily. STE Ser/Thr protein kinase family. STE20 subfamily. Component of a trimeric complex composed of STK11/LKB1, STRAD (STRADA or STRADB) and CAB39/MO25 (CAB39/MO25alpha or CAB39L/MO25beta): the complex tethers STK11/LKB1 in the cytoplasm and stimulates its catalytic activity.

It localises to the nucleus. Its subcellular location is the cytoplasm. Functionally, pseudokinase which, in complex with CAB39/MO25 (CAB39/MO25alpha or CAB39L/MO25beta), binds to and activates STK11/LKB1. Adopts a closed conformation typical of active protein kinases and binds STK11/LKB1 as a pseudosubstrate, promoting conformational change of STK11/LKB1 in an active conformation. In Bos taurus (Bovine), this protein is STE20-related kinase adapter protein alpha (STRADA).